A 348-amino-acid chain; its full sequence is Dihydroorotase (348 aa).

Positions 14 and 16 each coordinate Zn(2+). Residues 16–18 (HLR) and asparagine 42 each bind substrate. Zn(2+)-binding residues include lysine 100, histidine 137, and histidine 175. Lysine 100 is modified (N6-carboxylysine). Histidine 137 serves as a coordination point for substrate. Substrate is bound at residue leucine 220. Aspartate 248 is a Zn(2+) binding site. The active site involves aspartate 248. Histidine 252 and alanine 264 together coordinate substrate.

It belongs to the metallo-dependent hydrolases superfamily. DHOase family. Class II DHOase subfamily. In terms of assembly, homodimer. It depends on Zn(2+) as a cofactor.

The catalysed reaction is (S)-dihydroorotate + H2O = N-carbamoyl-L-aspartate + H(+). It participates in pyrimidine metabolism; UMP biosynthesis via de novo pathway; (S)-dihydroorotate from bicarbonate: step 3/3. Catalyzes the reversible cyclization of carbamoyl aspartate to dihydroorotate. This is Dihydroorotase from Azotobacter vinelandii (strain DJ / ATCC BAA-1303).